A 271-amino-acid chain; its full sequence is Sedoheptulose 1,7-bisphosphatase (271 aa).

Substrate is bound at residue Arg-12. The active-site Tele-phosphohistidine intermediate is the His-13. Substrate contacts are provided by residues 24–25 (YT), Arg-69, 99–102 (EWEY), Arg-181, and His-244. The Proton donor/acceptor role is filled by Glu-99.

Belongs to the phosphoglycerate mutase family. SHB17 subfamily. In terms of assembly, homodimer.

The protein localises to the cytoplasm. The protein resides in the nucleus. It catalyses the reaction D-sedoheptulose 1,7-bisphosphate + H2O = D-sedoheptulose 7-phosphate + phosphate. In terms of biological role, sedoheptulose 1,7-bisphosphatase involved in riboneogenesis. Dephosphorylates sedoheptulose 1,7-bisphosphate (SBP), which is converted via the non-oxidative pentose phosphate pathway to ribose-5-phosphate. Has a fructose 1,6-bisphosphatase activity in vitro, but this is probably not biologically relevant, since deletion does not affect fructose 1,6-biphosphate (FBP) levels. This Saccharomyces cerevisiae (strain ATCC 204508 / S288c) (Baker's yeast) protein is Sedoheptulose 1,7-bisphosphatase (SHB17).